The chain runs to 137 residues: uncharacterized protein (137 aa).

A helical membrane pass occupies residues 75-91; sequence MFLDAMVILAVASGVSL. Positions 93–116 are disordered; that stretch reads PQLPGRRSHNASTPGAKKPGKDHG.

The protein resides in the membrane. This is an uncharacterized protein from Saccharomyces cerevisiae (strain ATCC 204508 / S288c) (Baker's yeast).